The primary structure comprises 863 residues: MSSPASTPSRRGSRRGRATPAQTPRSEDARSSPSQRRRGEDSTSTGELQPMPTSPGVDLQSPAAQDVLFSSPPQMHSSAIPLDFDVSSPLTYGTPSSRVEGTPRSGVRGTPVRQRPDLGSAQKGLQVDLQSDGAAAEDIVASEQSLGQKLVIWGTDVNVAACKENFQRFLQRFIDPLAKEEENVGIDITEPLYMQRLGEINVIGEPFLNVNCEHIKSFDKNLYRQLISYPQEVIPTFDMAVNEIFFDRYPDSILEHQIQVRPFNALKTKNMRNLNPEDIDQLITISGMVIRTSQLIPEMQEAFFQCQVCAHTTRVEMDRGRIAEPSVCGRCHTTHSMALIHNRSLFSDKQMIKLQESPEDMPAGQTPHTVILFAHNDLVDKVQPGDRVNVTGIYRAVPIRVNPRVSNVKSVYKTHIDVIHYRKTDAKRLHGLDEEAEQKLFSEKRVELLKELSRKPDIYERLASALAPSIYEHEDIKKGILLQLFGGTRKDFSHTGRGKFRAEINILLCGDPGTSKSQLLQYVYNLVPRGQYTSGKGSSAVGLTAYVMKDPETRQLVLQTGALVLSDNGICCIDEFDKMNESTRSVLHEVMEQQTLSIAKAGIICQLNARTSVLAAANPIESQWNPKKTTIENIQLPHTLLSRFDLIFLLLDPQDEAYDRRLAHHLVALYYQSEEQAEEELLDMAVLKDYIAYAHSTIMPRLSEEASQALIEAYVDMRKIGSSRGMVSAYPRQLESLIRLAEAHAKVRLSNKVEAIDVEEAKRLHREALKQSATDPRTGIVDISILTTGMSATSRKRKEELAEALKKLILSKGKTPALKYQQLFEDIRGQSDIAITKDMFEEALRALADDDFLTVTGKTVRLL.

Low complexity predominate over residues 1 to 10 (MSSPASTPSR). Disordered stretches follow at residues 1–60 (MSSP…VDLQ) and 91–126 (TYGTPSSRVEGTPRSGVRGTPVRQRPDLGSAQKGLQ). Serine 2 carries the N-acetylserine modification. Phosphoserine; by CDC7 is present on serine 6. Residues threonine 7 and threonine 19 each carry the phosphothreonine modification. Residues serine 26, serine 31, serine 32, and serine 34 each carry the phosphoserine modification. At threonine 102 the chain carries Phosphothreonine. Phosphoserine is present on serine 105. Phosphothreonine is present on threonine 110. A phosphoserine mark is found at serine 120, serine 131, serine 142, and serine 145. Position 220 is an N6-acetyllysine (lysine 220). Lysine 439 is covalently cross-linked (Glycyl lysine isopeptide (Lys-Gly) (interchain with G-Cter in SUMO2)). Lysine 450 bears the N6-acetyllysine mark. Positions 458–667 (IYERLASALA…YDRRLAHHLV (210 aa)) constitute an MCM domain. 8 residues coordinate ATP: tyrosine 471, arginine 497, lysine 516, serine 517, asparagine 618, arginine 643, arginine 732, and glutamate 735. The short motif at 642–645 (SRFD) is the Arginine finger element. A Glycyl lysine isopeptide (Lys-Gly) (interchain with G-Cter in SUMO2) cross-link involves residue lysine 798. Lysine 858 is subject to N6-acetyllysine.

It belongs to the MCM family. Component of the MCM2-7 complex. The complex forms a toroidal hexameric ring with the proposed subunit order MCM2-MCM6-MCM4-MCM7-MCM3-MCM5. Component of the CMG helicase complex, a hexameric ring of related MCM2-7 subunits stabilized by CDC45 and the tetrameric GINS complex. Interacts with MCMBP. In terms of processing, sumoylated; SUMO2 modified in response to stress caused by inhibition of proteasome activity (in vitro).

The protein localises to the nucleus. It localises to the chromosome. It catalyses the reaction ATP + H2O = ADP + phosphate + H(+). Its function is as follows. Acts as a component of the MCM2-7 complex (MCM complex) which is the replicative helicase essential for 'once per cell cycle' DNA replication initiation and elongation in eukaryotic cells. Core component of CDC45-MCM-GINS (CMG) helicase, the molecular machine that unwinds template DNA during replication, and around which the replisome is built. The active ATPase sites in the MCM2-7 ring are formed through the interaction surfaces of two neighboring subunits such that a critical structure of a conserved arginine finger motif is provided in trans relative to the ATP-binding site of the Walker A box of the adjacent subunit. The six ATPase active sites, however, are likely to contribute differentially to the complex helicase activity. This is DNA replication licensing factor MCM4 from Homo sapiens (Human).